An 850-amino-acid chain; its full sequence is Polyhomeotic-like protein 2 (850 aa).

Disordered regions lie at residues 1–79, 233–314, 335–386, 402–436, and 528–553; these read MENE…QYLQ, QQTP…RAVP, LPQP…DHAL, THVH…PPQR, and MTSG…KPPQ. A compositionally biased stretch (low complexity) spans 15–32; sequence SVTTNTSGTNSSSGCISS. The segment at 33–56 is interaction with BMI1; that stretch reads SGGGGGSGGRPTAPQISVYSGIPD. The segment covering 343-352 has biased composition (low complexity); the sequence is PQPQFVAQQQ. Polar residues-rich tracts occupy residues 368–380 and 402–425; these read LASV…LQSS and THVH…SQNG. Residues 529–543 show a composition bias toward low complexity; sequence TSGNGNSASSIAGTA. Residues 550–579 carry the HD1 motif; it reads KPPQAIVKPQILTHVIEGFVIQEGAEPFPV. Residues Lys-590 and Lys-592 each participate in a glycyl lysine isopeptide (Lys-Gly) (interchain with G-Cter in SUMO2) cross-link. A disordered region spans residues 597 to 624; that stretch reads FLPEKPPQQDHTTTTDSEMEEPYLQESK. Thr-611 carries the phosphothreonine modification. Position 613 is a phosphoserine (Ser-613). A Glycyl lysine isopeptide (Lys-Gly) (interchain with G-Cter in SUMO2) cross-link involves residue Lys-624. Residues 625-659 form an FCS-type zinc finger; sequence EEGTPLKLKCELCGRVDFAYKFKRSKRFCSMACAK. Cys-634, Cys-637, Cys-653, and Cys-657 together coordinate Zn(2+). 2 disordered regions span residues 676–712 and 725–764; these read RSKL…SGTV and SQED…LDLP. Lys-694 participates in a covalent cross-link: Glycyl lysine isopeptide (Lys-Gly) (interchain with G-Cter in SUMO2). The segment covering 696–712 has biased composition (polar residues); sequence SLPTLTKDTKKQPSGTV. At Ser-743 the chain carries Phosphoserine. The SAM domain maps to 786–850; the sequence is WNVEDVYEFI…YARISMLKDS (65 aa). A Glycyl lysine isopeptide (Lys-Gly) (interchain with G-Cter in SUMO2) cross-link involves residue Lys-839.

In terms of assembly, component of a PRC1-like complex. Interacts with CBX4. Interacts with BMI1, PCGF2, PHC1 and RNF2. Interacts with CHTOP. Interacts with the N-terminal region of the SP1 transcription factor and with MAPKAPK2. Interacts with SAMD7. Interacts with SAMD11. Isoform 2 is ubiquitously expressed in embryos and adult tissues at much higher level than isoform 1.

It is found in the nucleus. Component of a Polycomb group (PcG) multiprotein PRC1-like complex, a complex class required to maintain the transcriptionally repressive state of many genes, including Hox genes, throughout development. PcG PRC1 complex acts via chromatin remodeling and modification of histones; it mediates monoubiquitination of histone H2A 'Lys-119', rendering chromatin heritably changed in its expressibility. This chain is Polyhomeotic-like protein 2 (Phc2), found in Mus musculus (Mouse).